Reading from the N-terminus, the 368-residue chain is tRNA-specific 2-thiouridylase MnmA (368 aa).

ATP is bound by residues 11-18 (GMSGGVDS) and methionine 37. Residues 97–99 (NPD) form an interaction with target base in tRNA region. The active-site Nucleophile is cysteine 102. Cysteine 102 and cysteine 199 are joined by a disulfide. Glycine 127 contacts ATP. The segment at 149–151 (KDQ) is interaction with tRNA. Cysteine 199 functions as the Cysteine persulfide intermediate in the catalytic mechanism. The tract at residues 311–312 (RY) is interaction with tRNA.

Belongs to the MnmA/TRMU family. In terms of assembly, interacts with TusE.

The protein resides in the cytoplasm. It catalyses the reaction S-sulfanyl-L-cysteinyl-[protein] + uridine(34) in tRNA + AH2 + ATP = 2-thiouridine(34) in tRNA + L-cysteinyl-[protein] + A + AMP + diphosphate + H(+). In terms of biological role, catalyzes the 2-thiolation of uridine at the wobble position (U34) of tRNA(Lys), tRNA(Glu) and tRNA(Gln), leading to the formation of s(2)U34, the first step of tRNA-mnm(5)s(2)U34 synthesis. Sulfur is provided by IscS, via a sulfur-relay system. Binds ATP and its substrate tRNAs. In Klebsiella pneumoniae (strain 342), this protein is tRNA-specific 2-thiouridylase MnmA.